A 160-amino-acid chain; its full sequence is Urease accessory protein UreE (160 aa).

This sequence belongs to the UreE family.

Its subcellular location is the cytoplasm. Functionally, involved in urease metallocenter assembly. Binds nickel. Probably functions as a nickel donor during metallocenter assembly. This chain is Urease accessory protein UreE, found in Acinetobacter baumannii (strain AB307-0294).